The primary structure comprises 169 residues: Inorganic pyrophosphatase (169 aa).

Residues Lys26, Arg40, and Tyr52 each contribute to the substrate site. The Mg(2+) site is built by Asp62, Asp67, and Asp99. Residue Tyr138 participates in substrate binding.

Belongs to the PPase family. In terms of assembly, homohexamer. Mg(2+) is required as a cofactor.

Its subcellular location is the cytoplasm. The catalysed reaction is diphosphate + H2O = 2 phosphate + H(+). Functionally, catalyzes the hydrolysis of inorganic pyrophosphate (PPi) forming two phosphate ions. In Thermoplasma volcanium (strain ATCC 51530 / DSM 4299 / JCM 9571 / NBRC 15438 / GSS1), this protein is Inorganic pyrophosphatase.